We begin with the raw amino-acid sequence, 475 residues long: ATP-dependent protease ATPase subunit HslU1 (475 aa).

The N-terminal 27 residues, 1–27 (MMRRVTSSLPSALKLGRSLGPNVRFSG), are a transit peptide targeting the mitochondrion. Residues I66, 108-113 (GVGKTE), D286, E353, and R425 each bind ATP.

It belongs to the ClpX chaperone family. HslU subfamily. In terms of assembly, a double ring-shaped homohexamer of HslV is capped on each side by a ring-shaped HslU homohexamer. The assembly of the HslU/HslV complex (HslVU) is dependent on binding of ATP.

The protein resides in the mitochondrion matrix. It localises to the kinetoplast. Its function is as follows. ATPase subunit of a proteasome-like degradation complex; this subunit has chaperone activity. The binding of ATP and its subsequent hydrolysis by HslU are essential for unfolding of protein substrates subsequently hydrolyzed by HslV. HslU recognizes the N-terminal part of its protein substrates and unfolds these before they are guided to HslV for hydrolysis. The HslVU protease complex functions in mitochondrial DNA replication by regulating DNA helicase PIF2 protein levels. The sequence is that of ATP-dependent protease ATPase subunit HslU1 (HslU1) from Trypanosoma brucei brucei (strain 927/4 GUTat10.1).